A 35-amino-acid chain; its full sequence is Tau-theraphotoxin-Pc1b (35 aa).

3 disulfides stabilise this stretch: Cys3–Cys17, Cys10–Cys22, and Cys16–Cys29. The residue at position 35 (Phe35) is a Phenylalanine amide.

This sequence belongs to the neurotoxin 10 (Hwtx-1) family. 62 (Vatx) subfamily. In terms of tissue distribution, expressed by the venom gland.

It is found in the secreted. In terms of biological role, selectively activates the mammalian capsaicin receptor TRPV1, a non-selective cation channel expressed by sensory neurons of the pain pathway. Is more potent than VaTx1, but less potent than VaTx3. Interacts with distinct regions of the channel than capsaicin, since it only acts on the extracellular face of the channel, and capsaicin binds to the cytosolic side. Also activates avian TRPV1, which is insensitive to capsaicin. Produce weak inhibition on potassium channels Kv2.1/KCNB1. This is Tau-theraphotoxin-Pc1b from Psalmopoeus cambridgei (Trinidad chevron tarantula).